Here is a 304-residue protein sequence, read N- to C-terminus: Aspartate carbamoyltransferase catalytic subunit (304 aa).

Carbamoyl phosphate-binding residues include arginine 57 and threonine 58. An L-aspartate-binding site is contributed by lysine 86. 3 residues coordinate carbamoyl phosphate: arginine 107, histidine 135, and glutamine 138. The L-aspartate site is built by arginine 168 and arginine 229. Residues leucine 266 and proline 267 each coordinate carbamoyl phosphate.

The protein belongs to the aspartate/ornithine carbamoyltransferase superfamily. ATCase family. As to quaternary structure, heterooligomer of catalytic and regulatory chains.

It catalyses the reaction carbamoyl phosphate + L-aspartate = N-carbamoyl-L-aspartate + phosphate + H(+). It participates in pyrimidine metabolism; UMP biosynthesis via de novo pathway; (S)-dihydroorotate from bicarbonate: step 2/3. Functionally, catalyzes the condensation of carbamoyl phosphate and aspartate to form carbamoyl aspartate and inorganic phosphate, the committed step in the de novo pyrimidine nucleotide biosynthesis pathway. This chain is Aspartate carbamoyltransferase catalytic subunit, found in Methanosphaera stadtmanae (strain ATCC 43021 / DSM 3091 / JCM 11832 / MCB-3).